The following is a 206-amino-acid chain: MARYLGPKLKLSRREGTDLFLKSGVRAIDTKCKIEQAPGQHGARKPRLSDYGVQLREKQKVRRTYGVLERQFRNYYKEAARLKGNTGENLLALLEGRLDNVVYRMGFGATRAESRQLVSHKAIMVNGRVVNIASYQVKANDVVCIREKAKKQSRVKAALELAEQREKPTWLEVDASKMEGTFKRQPERSDLSADINEHLIVELYSK.

The region spanning 96-156 (GRLDNVVYRM…EKAKKQSRVK (61 aa)) is the S4 RNA-binding domain.

Belongs to the universal ribosomal protein uS4 family. Part of the 30S ribosomal subunit. Contacts protein S5. The interaction surface between S4 and S5 is involved in control of translational fidelity.

Functionally, one of the primary rRNA binding proteins, it binds directly to 16S rRNA where it nucleates assembly of the body of the 30S subunit. With S5 and S12 plays an important role in translational accuracy. The protein is Small ribosomal subunit protein uS4 of Enterobacter sp. (strain 638).